The following is a 307-amino-acid chain: Oxygen-dependent coproporphyrinogen-III oxidase (307 aa).

Residue Ser99 coordinates substrate. A divalent metal cation is bound by residues His103 and His113. His113 serves as the catalytic Proton donor. Position 115-117 (115-117 (NVR)) interacts with substrate. A divalent metal cation-binding residues include His152 and His182. Residues 247–282 (YVEFNLVFDRGTLFGLQSGGRTESILLSMPPTAGWR) form an important for dimerization region. Residue 265-267 (GGR) participates in substrate binding.

Belongs to the aerobic coproporphyrinogen-III oxidase family. In terms of assembly, homodimer. A divalent metal cation is required as a cofactor.

The protein resides in the cytoplasm. The catalysed reaction is coproporphyrinogen III + O2 + 2 H(+) = protoporphyrinogen IX + 2 CO2 + 2 H2O. Its pathway is porphyrin-containing compound metabolism; protoporphyrin-IX biosynthesis; protoporphyrinogen-IX from coproporphyrinogen-III (O2 route): step 1/1. Involved in the heme biosynthesis. Catalyzes the aerobic oxidative decarboxylation of propionate groups of rings A and B of coproporphyrinogen-III to yield the vinyl groups in protoporphyrinogen-IX. This chain is Oxygen-dependent coproporphyrinogen-III oxidase, found in Burkholderia mallei (strain SAVP1).